A 514-amino-acid chain; its full sequence is Alpha-amylase (514 aa).

Residues 1–31 form the signal peptide; it reads MIQKRKRTVSFRLVLMCTLLFVSLPITKTSA. Residues N133, D190, A212, D214, D225, D231, D233, and D235 each contribute to the Ca(2+) site. D190 provides a ligand contact to Na(+). The Na(+) site is built by D214, D225, and D231. D262 (nucleophile) is an active-site residue. Position 266 (H266) interacts with Ca(2+). Residue E292 is the Proton donor of the active site. G331, D438, and D461 together coordinate Ca(2+).

It belongs to the glycosyl hydrolase 13 family. In terms of assembly, monomer. Ca(2+) is required as a cofactor. The cofactor is Na(+).

Its subcellular location is the secreted. It catalyses the reaction Endohydrolysis of (1-&gt;4)-alpha-D-glucosidic linkages in polysaccharides containing three or more (1-&gt;4)-alpha-linked D-glucose units.. The polypeptide is Alpha-amylase (Bacillus amyloliquefaciens (Bacillus velezensis)).